Consider the following 342-residue polypeptide: Trans-3-hydroxy-L-proline dehydratase (342 aa).

The active-site Proton acceptor is the S90. Substrate is bound by residues 91 to 92 (GS), D251, and 256 to 257 (GT).

It belongs to the proline racemase family.

It catalyses the reaction trans-3-hydroxy-L-proline = 1-pyrroline-2-carboxylate + H2O. Its function is as follows. Catalyzes the dehydration of trans-3-hydroxy-L-proline (t3LHyp) to Delta(1)-pyrroline-2-carboxylate (Pyr2C). Displays neither proline racemase activity nor 4-hydroxyproline 2-epimerase activity. The sequence is that of Trans-3-hydroxy-L-proline dehydratase from Brucella suis biovar 1 (strain 1330).